The following is a 1367-amino-acid chain: MAP3K epsilon protein kinase 2 (1367 aa).

One can recognise a Protein kinase domain in the interval 20-274 (YMLGDEIGKG…AKTLLSHPWI (255 aa)). 2 HEAT repeats span residues 25 to 62 (EIGK…EDLN) and 86 to 125 (LKTK…TVYI). Residues 26–34 (IGKGAYGRV) and Lys-49 each bind ATP. Asp-144 acts as the Proton acceptor in catalysis. Residues 218–256 (PYYDLQPMPALYRIVQDDTPPIPDSLSPDITDFLRLCFK) form an HEAT 3 repeat. 2 disordered regions span residues 285-422 (LRHS…GRRN) and 437-513 (SSHS…VADG). Over residues 293–306 (YMKETDSSSEKDAE) the composition is skewed to basic and acidic residues. Positions 351–363 (LGEEGTDSEDDIN) are enriched in acidic residues. A compositionally biased stretch (polar residues) spans 378-396 (RQSGTCSISSDAKGTSQDV). Basic and acidic residues-rich tracts occupy residues 397–408 (LENHEKYDRDEI) and 475–491 (SLHD…EGKT). The segment covering 492-507 (NEASTSTPTANVNQGD) has biased composition (polar residues). HEAT repeat units lie at residues 538–576 (SQDG…LFPL), 577–614 (QAVE…RPGQ), 633–658 (IPKS…DFLE), 659–700 (NACL…SSPL), and 704–742 (MFIS…VFKL). The segment at 792-860 (PRARSGQLDP…LHPDGDRPRL (69 aa)) is disordered. 2 stretches are compositionally biased toward polar residues: residues 799–814 (LDPN…TSPS) and 835–845 (ALTSNSQSSDV). A compositionally biased stretch (basic and acidic residues) spans 846 to 859 (HQPDALHPDGDRPR). HEAT repeat units follow at residues 850–888 (ALHP…STDK), 906–943 (DQVR…HESR), 1045–1066 (DYLE…TVKS), 1067–1105 (YMCS…DPNC), 1112–1150 (ADAI…INKR), 1154–1191 (QAAE…ASRN), 1196–1236 (LRAH…KVEQ), 1257–1280 (RHFV…NKTL), 1281–1317 (ALNG…KHPK), and 1347–1367 (QVLV…NTIL).

Belongs to the protein kinase superfamily. Ser/Thr protein kinase family. Post-translationally, autophosphorylated. In terms of tissue distribution, expressed in both the sporophytic and the gametophytic tissues, especially in dividing cells. Mostly present in flower buds and mature flowers. Also accumulates in embryos and in roots.

The protein localises to the cytoplasm. It is found in the cytoskeleton. Its subcellular location is the microtubule organizing center. The protein resides in the nucleus. It localises to the nucleolus. The protein localises to the cell membrane. The catalysed reaction is L-seryl-[protein] + ATP = O-phospho-L-seryl-[protein] + ADP + H(+). It catalyses the reaction L-threonyl-[protein] + ATP = O-phospho-L-threonyl-[protein] + ADP + H(+). Its function is as follows. Serine/threonine-protein kinase involved in the spatial and temporal control system organizing cortical activities in mitotic and postmitotic cells. Required for the normal functioning of the plasma membrane in developing pollen. Involved in the regulation of cell expansion and embryo development. In Arabidopsis thaliana (Mouse-ear cress), this protein is MAP3K epsilon protein kinase 2.